Consider the following 457-residue polypeptide: Secreted RxLR effector protein 8 (457 aa).

The N-terminal stretch at 1-19 is a signal peptide; that stretch reads MRGTLATALLLVISSRVAT. Residues 48 to 69 carry the RxLR-dEER motif; the sequence is RFLRGSRKQRDDLAPTAADENR. N-linked (GlcNAc...) asparagine glycosylation occurs at N68. Disordered regions lie at residues 110-188 and 398-457; these read RLSL…ALKS and RQTI…RSSS. Residues 135–152 are compositionally biased toward low complexity; sequence SASTSTTSDIATSSSRTS. Composition is skewed to polar residues over residues 153 to 163 and 176 to 187; these read NQRTPKTQASL and SKNQFKKSTALK. Basic residues predominate over residues 442–457; the sequence is IKSKDHARKKRPRSSS.

It belongs to the RxLR effector family.

It is found in the secreted. Its subcellular location is the host nucleus. In terms of biological role, secreted effector that completely suppresses the host cell death induced by cell death-inducing proteins. The sequence is that of Secreted RxLR effector protein 8 from Plasmopara viticola (Downy mildew of grapevine).